The chain runs to 290 residues: Small ribosomal subunit biogenesis GTPase RsgA (290 aa).

The CP-type G domain occupies 62-213 (KNSLVRPPIV…IADTPGFSSL (152 aa)). GTP contacts are provided by residues 111–114 (SKMD) and 156–164 (GQTGVGKST). Zn(2+) contacts are provided by cysteine 237, cysteine 242, histidine 244, and cysteine 250.

Belongs to the TRAFAC class YlqF/YawG GTPase family. RsgA subfamily. As to quaternary structure, monomer. Associates with 30S ribosomal subunit, binds 16S rRNA. Zn(2+) serves as cofactor.

It localises to the cytoplasm. Functionally, one of several proteins that assist in the late maturation steps of the functional core of the 30S ribosomal subunit. Helps release RbfA from mature subunits. May play a role in the assembly of ribosomal proteins into the subunit. Circularly permuted GTPase that catalyzes slow GTP hydrolysis, GTPase activity is stimulated by the 30S ribosomal subunit. The protein is Small ribosomal subunit biogenesis GTPase RsgA of Streptococcus pyogenes serotype M6 (strain ATCC BAA-946 / MGAS10394).